The chain runs to 437 residues: 3-ketoacyl-CoA thiolase (437 aa).

Residue cysteine 99 is the Acyl-thioester intermediate of the active site. Residues histidine 392 and cysteine 422 each act as proton acceptor in the active site.

The protein belongs to the thiolase-like superfamily. Thiolase family. In terms of assembly, heterotetramer of two alpha chains (FadJ) and two beta chains (FadI).

Its subcellular location is the cytoplasm. It catalyses the reaction an acyl-CoA + acetyl-CoA = a 3-oxoacyl-CoA + CoA. The protein operates within lipid metabolism; fatty acid beta-oxidation. In terms of biological role, catalyzes the final step of fatty acid oxidation in which acetyl-CoA is released and the CoA ester of a fatty acid two carbons shorter is formed. The chain is 3-ketoacyl-CoA thiolase from Pectobacterium atrosepticum (strain SCRI 1043 / ATCC BAA-672) (Erwinia carotovora subsp. atroseptica).